Consider the following 106-residue polypeptide: ATP-dependent Clp protease adapter protein ClpS (106 aa).

This sequence belongs to the ClpS family. Binds to the N-terminal domain of the chaperone ClpA.

Functionally, involved in the modulation of the specificity of the ClpAP-mediated ATP-dependent protein degradation. This Photobacterium profundum (strain SS9) protein is ATP-dependent Clp protease adapter protein ClpS.